A 179-amino-acid chain; its full sequence is Large ribosomal subunit protein uL6 (179 aa).

Belongs to the universal ribosomal protein uL6 family. As to quaternary structure, part of the 50S ribosomal subunit.

In terms of biological role, this protein binds to the 23S rRNA, and is important in its secondary structure. It is located near the subunit interface in the base of the L7/L12 stalk, and near the tRNA binding site of the peptidyltransferase center. The polypeptide is Large ribosomal subunit protein uL6 (Streptomyces griseus subsp. griseus (strain JCM 4626 / CBS 651.72 / NBRC 13350 / KCC S-0626 / ISP 5235)).